A 362-amino-acid chain; its full sequence is MASRREVRCRCGRRMWVQPDARTVQCSTCHTVTQLYSLVDIARGANRIIHGFQQLLRQHQPQHHEQQQQQMMAQPPPRLLEPLPSPFGKKRAVLCGVNYKGKSYSLKGCISDAKSMRSLLVQQMGFPIDSILMLTEDEASPQRIPTKRNIRKAMRWLVEGNRARDSLVFHFSGHGSQQNDYNGDEIDGQDEALCPLDHETEGKIIDDEINRILVRPLVHGAKLHAVIDACNSGTVLDLPFICRMERNGSYEWEDHRSVRAYKGTDGGAAFCFSACDDDESSGYTPVFTGKNTGAMTYSFIKAVKTAGPAPTYGHLLNLMCSAIREAQSRLAFNGDYTSSDASAEPLLTSSEEFDVYATKFVL.

Residues histidine 174 and cysteine 230 contribute to the active site.

It belongs to the peptidase C14B family.

This is Metacaspase-3 (AMC3) from Arabidopsis thaliana (Mouse-ear cress).